We begin with the raw amino-acid sequence, 348 residues long: GMP reductase (348 aa).

Residue 108–131 coordinates NADP(+); it reads ADFQKTKDIMALSDELIFICVDIA. The K(+) site is built by glycine 181 and glycine 183. The Thioimidate intermediate role is filled by cysteine 186. An NADP(+)-binding site is contributed by 216–239; that stretch reads IIGDGGCSCAGDVSKAFGGGADFV.

The protein belongs to the IMPDH/GMPR family. GuaC type 1 subfamily. In terms of assembly, homotetramer.

It catalyses the reaction IMP + NH4(+) + NADP(+) = GMP + NADPH + 2 H(+). Catalyzes the irreversible NADPH-dependent deamination of GMP to IMP. It functions in the conversion of nucleobase, nucleoside and nucleotide derivatives of G to A nucleotides, and in maintaining the intracellular balance of A and G nucleotides. In Vibrio parahaemolyticus serotype O3:K6 (strain RIMD 2210633), this protein is GMP reductase.